The chain runs to 262 residues: Transmembrane and immunoglobulin domain-containing protein 1 (262 aa).

Positions 1–29 are cleaved as a signal peptide; the sequence is MAWKSSVIMQMGRFLLLVILFLPREMTSS. One can recognise an Ig-like C2-type 1 domain in the interval 30-114; sequence VLTVNGKTEN…LGRDQSVSVS (85 aa). Residues 30-220 are Extracellular-facing; the sequence is VLTVNGKTEN…IVKDKTVGVP (191 aa). A disulfide bridge links Cys-54 with Cys-103. N-linked (GlcNAc...) asparagine glycosylation is found at Asn-58, Asn-83, Asn-118, Asn-158, and Asn-190. The region spanning 122–207 is the Ig-like C2-type 2 domain; it reads PPLLSGNDFQ…KSSLKTESLD (86 aa). A disulfide bridge links Cys-143 with Cys-195. The chain crosses the membrane as a helical span at residues 221–241; the sequence is IEPIIAACVVIFLTLCFGLIA. Topologically, residues 242-262 are cytoplasmic; that stretch reads RRKKIMKLCMKDKDPHSETAL.

In terms of assembly, homodimer. N-glycosylated.

The protein resides in the cell membrane. It is found in the cytoplasm. In terms of biological role, may control cell-cell adhesion, cell migration and proliferation, cell morphology, and protects renal epithelial cells from oxidative cell injury to promote cell survival. The sequence is that of Transmembrane and immunoglobulin domain-containing protein 1 from Homo sapiens (Human).